Reading from the N-terminus, the 242-residue chain is UPF0273 protein MJ1359 (242 aa).

One can recognise a KaiC domain in the interval 2–242; the sequence is KRVKTGIPGM…VYPDKVLKLR (241 aa). 29-36 contributes to the ATP binding site; the sequence is GGPGTGKS.

It belongs to the UPF0273 family.

The sequence is that of UPF0273 protein MJ1359 from Methanocaldococcus jannaschii (strain ATCC 43067 / DSM 2661 / JAL-1 / JCM 10045 / NBRC 100440) (Methanococcus jannaschii).